The primary structure comprises 95 residues: uncharacterized protein (95 aa).

Positions 60 to 89 (VKNMINRIVEELDKRIDEIKEGLNELEKSG) form a coiled coil.

This is an uncharacterized protein from Sulfolobus islandicus filamentous virus (isolate Iceland/Hveragerdi) (SIFV).